A 704-amino-acid polypeptide reads, in one-letter code: Elongation factor G (704 aa).

One can recognise a tr-type G domain in the interval 8–290; the sequence is ARYRNIGISA…AVIDYLPAPT (283 aa). GTP-binding positions include 17-24, 88-92, and 142-145; these read AHIDAGKT, DTPGH, and NKMD.

This sequence belongs to the TRAFAC class translation factor GTPase superfamily. Classic translation factor GTPase family. EF-G/EF-2 subfamily.

The protein localises to the cytoplasm. Functionally, catalyzes the GTP-dependent ribosomal translocation step during translation elongation. During this step, the ribosome changes from the pre-translocational (PRE) to the post-translocational (POST) state as the newly formed A-site-bound peptidyl-tRNA and P-site-bound deacylated tRNA move to the P and E sites, respectively. Catalyzes the coordinated movement of the two tRNA molecules, the mRNA and conformational changes in the ribosome. The protein is Elongation factor G of Pectobacterium atrosepticum (strain SCRI 1043 / ATCC BAA-672) (Erwinia carotovora subsp. atroseptica).